Consider the following 841-residue polypeptide: Translation initiation factor IF-2 (841 aa).

The region spanning 341–508 is the tr-type G domain; it reads NRAPVVTIMG…AILLQAEILE (168 aa). Positions 350-357 are G1; that stretch reads GHVDHGKT. 350–357 contacts GTP; that stretch reads GHVDHGKT. Positions 375–379 are G2; that stretch reads GITQC. The segment at 396–399 is G3; it reads DTPG. Residues 396-400 and 450-453 contribute to the GTP site; these read DTPGH and NKID. Residues 450 to 453 are G4; the sequence is NKID. Positions 486–488 are G5; sequence SAK.

The protein belongs to the TRAFAC class translation factor GTPase superfamily. Classic translation factor GTPase family. IF-2 subfamily.

Its subcellular location is the cytoplasm. One of the essential components for the initiation of protein synthesis. Protects formylmethionyl-tRNA from spontaneous hydrolysis and promotes its binding to the 30S ribosomal subunits. Also involved in the hydrolysis of GTP during the formation of the 70S ribosomal complex. This is Translation initiation factor IF-2 from Wigglesworthia glossinidia brevipalpis.